Consider the following 859-residue polypeptide: Leucine--tRNA ligase (859 aa).

The 'HIGH' region signature appears at 42-52; that stretch reads PYPSGRLHMGH. A 'KMSKS' region motif is present at residues 618-622; that stretch reads KMSKS. Lys-621 is an ATP binding site.

Belongs to the class-I aminoacyl-tRNA synthetase family.

The protein resides in the cytoplasm. The catalysed reaction is tRNA(Leu) + L-leucine + ATP = L-leucyl-tRNA(Leu) + AMP + diphosphate. This chain is Leucine--tRNA ligase, found in Shewanella sp. (strain MR-7).